The primary structure comprises 283 residues: Pantothenate synthetase (283 aa).

30-37 is an ATP binding site; the sequence is MGNLHAGH. H37 (proton donor) is an active-site residue. Q61 is a binding site for (R)-pantoate. Q61 is a binding site for beta-alanine. 149-152 contributes to the ATP binding site; the sequence is GEKD. Q155 contacts (R)-pantoate. Residues L178 and 186-189 each bind ATP; that span reads MSSR.

Belongs to the pantothenate synthetase family. Homodimer.

It is found in the cytoplasm. The enzyme catalyses (R)-pantoate + beta-alanine + ATP = (R)-pantothenate + AMP + diphosphate + H(+). It functions in the pathway cofactor biosynthesis; (R)-pantothenate biosynthesis; (R)-pantothenate from (R)-pantoate and beta-alanine: step 1/1. Catalyzes the condensation of pantoate with beta-alanine in an ATP-dependent reaction via a pantoyl-adenylate intermediate. In Hahella chejuensis (strain KCTC 2396), this protein is Pantothenate synthetase.